The primary structure comprises 64 residues: Large ribosomal subunit protein bL33c (64 aa).

The protein belongs to the bacterial ribosomal protein bL33 family.

It localises to the plastid. It is found in the chloroplast. This is Large ribosomal subunit protein bL33c (rpl33) from Mesostigma viride (Green alga).